Here is a 156-residue protein sequence, read N- to C-terminus: Small ribosomal subunit protein uS7 (156 aa).

This sequence belongs to the universal ribosomal protein uS7 family. Part of the 30S ribosomal subunit. Contacts proteins S9 and S11.

In terms of biological role, one of the primary rRNA binding proteins, it binds directly to 16S rRNA where it nucleates assembly of the head domain of the 30S subunit. Is located at the subunit interface close to the decoding center, probably blocks exit of the E-site tRNA. This Alkalilimnicola ehrlichii (strain ATCC BAA-1101 / DSM 17681 / MLHE-1) protein is Small ribosomal subunit protein uS7.